A 285-amino-acid polypeptide reads, in one-letter code: Probable endonuclease 4 (285 aa).

Zn(2+) is bound by residues His69, His109, Glu145, Asp179, His182, His216, Asp229, His231, and Glu261.

This sequence belongs to the AP endonuclease 2 family. Requires Zn(2+) as cofactor.

It carries out the reaction Endonucleolytic cleavage to 5'-phosphooligonucleotide end-products.. In terms of biological role, endonuclease IV plays a role in DNA repair. It cleaves phosphodiester bonds at apurinic or apyrimidinic (AP) sites, generating a 3'-hydroxyl group and a 5'-terminal sugar phosphate. The chain is Probable endonuclease 4 from Escherichia coli (strain SMS-3-5 / SECEC).